Consider the following 123-residue polypeptide: MVLPLMFMYCKLAMLSLAVGCCPPVKYRLAIAIPLLFNLFSRGCGRVNFTSVKIAFICGDTDCSVPQTVVPFFSSMVTCSLRSFFKKLTNFIIFFSTIYKRYLESSFFMTISLYMNISYILLF.

2 helical membrane passes run 1-21 (MVLP…AVGC) and 103-123 (LESS…ILLF).

It is found in the membrane. This is an uncharacterized protein from Saccharomyces cerevisiae (strain ATCC 204508 / S288c) (Baker's yeast).